Here is a 103-residue protein sequence, read N- to C-terminus: Small ribosomal subunit protein uS10 (103 aa).

The protein belongs to the universal ribosomal protein uS10 family. In terms of assembly, part of the 30S ribosomal subunit.

Its function is as follows. Involved in the binding of tRNA to the ribosomes. The polypeptide is Small ribosomal subunit protein uS10 (Vibrio cholerae serotype O1 (strain ATCC 39541 / Classical Ogawa 395 / O395)).